A 266-amino-acid chain; its full sequence is GTP cyclohydrolase III (266 aa).

This sequence belongs to the archaeal-type GTP cyclohydrolase family.

The enzyme catalyses GTP + 3 H2O = 2-amino-5-formylamino-6-(5-phospho-D-ribosylamino)pyrimidin-4(3H)-one + 2 phosphate + 2 H(+). Its function is as follows. Catalyzes the formation of 2-amino-5-formylamino-6-ribofuranosylamino-4(3H)-pyrimidinone ribonucleotide monophosphate and inorganic phosphate from GTP. Also has an independent pyrophosphate phosphohydrolase activity. This chain is GTP cyclohydrolase III, found in Methanococcus maripaludis (strain C7 / ATCC BAA-1331).